The primary structure comprises 657 residues: Wall-associated receptor kinase-like 20 (657 aa).

A signal peptide spans 1–23 (MEKKRSYYALLIPTLLTVWLACA). The Extracellular segment spans residues 24–293 (GHSCARHAKA…KHCKKKKKTV (270 aa)). N-linked (GlcNAc...) asparagine glycosylation occurs at Asn-140. Residues 294-314 (VFAGAAVAVVGVTLAIAVAVI) form a helical membrane-spanning segment. The Cytoplasmic portion of the chain corresponds to 315–657 (GTKHSHQKVK…NILSQEVTET (343 aa)). One can recognise a Protein kinase domain in the interval 363-646 (FSKDNLIGTG…KEVADEIEYI (284 aa)). ATP is bound by residues 369-377 (IGTGGFGEV) and Lys-391. The Proton acceptor role is filled by Asp-490.

It belongs to the protein kinase superfamily. Ser/Thr protein kinase family.

Its subcellular location is the membrane. The enzyme catalyses L-seryl-[protein] + ATP = O-phospho-L-seryl-[protein] + ADP + H(+). It carries out the reaction L-threonyl-[protein] + ATP = O-phospho-L-threonyl-[protein] + ADP + H(+). Serine/threonine-protein kinase that may function as a signaling receptor of extracellular matrix component. This Arabidopsis thaliana (Mouse-ear cress) protein is Wall-associated receptor kinase-like 20 (WAKL20).